Reading from the N-terminus, the 378-residue chain is POU domain, class 3, transcription factor 2 (378 aa).

Disordered stretches follow at residues 1 to 28 (MATT…SMQQ), 86 to 118 (SPRD…HDSR), and 151 to 205 (LIPG…TPTS). The segment covering 164 to 181 (MRDAHEDHHSPHLSDHGH) has biased composition (basic and acidic residues). In terms of domain architecture, POU-specific spans 200–274 (EDTPTSDDLE…LLNKWLEEAD (75 aa)). Position 279 is a phosphoserine (Ser279). Residues 292-351 (KRKKRTSIEVSVKGALESHFLKCPKPAASEITSLADSLQLEKEVVRVWFCNRRQKEKRMT) constitute a DNA-binding region (homeobox). The interval 347–378 (EKRMTPPGGPLPGTEDVYGDTPPHHGVQTPVQ) is disordered.

This sequence belongs to the POU transcription factor family. Class-3 subfamily. Predominantly expressed in the central nervous system, with strong expression in the cerebellum.

It is found in the nucleus. Its function is as follows. Transcription factor that may play important roles in patterning the embryonic brain. The protein is POU domain, class 3, transcription factor 2 (pou3f2) of Danio rerio (Zebrafish).